A 338-amino-acid chain; its full sequence is RNA 3'-terminal phosphate cyclase (338 aa).

ATP-binding positions include Q103 and Y283–Q287. H308 acts as the Tele-AMP-histidine intermediate in catalysis.

It belongs to the RNA 3'-terminal cyclase family. Type 1 subfamily.

It is found in the cytoplasm. The catalysed reaction is a 3'-end 3'-phospho-ribonucleotide-RNA + ATP = a 3'-end 2',3'-cyclophospho-ribonucleotide-RNA + AMP + diphosphate. In terms of biological role, catalyzes the conversion of 3'-phosphate to a 2',3'-cyclic phosphodiester at the end of RNA. The mechanism of action of the enzyme occurs in 3 steps: (A) adenylation of the enzyme by ATP; (B) transfer of adenylate to an RNA-N3'P to produce RNA-N3'PP5'A; (C) and attack of the adjacent 2'-hydroxyl on the 3'-phosphorus in the diester linkage to produce the cyclic end product. The biological role of this enzyme is unknown but it is likely to function in some aspects of cellular RNA processing. This Escherichia coli O6:H1 (strain CFT073 / ATCC 700928 / UPEC) protein is RNA 3'-terminal phosphate cyclase.